The following is a 325-amino-acid chain: Elongation factor P--(R)-beta-lysine ligase (325 aa).

76-78 contributes to the substrate binding site; that stretch reads SPE. Residues 100–102 and Asn109 contribute to the ATP site; that span reads RNE. Substrate is bound at residue Tyr118. Position 244–245 (244–245) interacts with ATP; the sequence is EL. Glu251 contributes to the substrate binding site. Gly300 provides a ligand contact to ATP.

Belongs to the class-II aminoacyl-tRNA synthetase family. EpmA subfamily. As to quaternary structure, homodimer.

It carries out the reaction D-beta-lysine + L-lysyl-[protein] + ATP = N(6)-((3R)-3,6-diaminohexanoyl)-L-lysyl-[protein] + AMP + diphosphate + H(+). With EpmB is involved in the beta-lysylation step of the post-translational modification of translation elongation factor P (EF-P). Catalyzes the ATP-dependent activation of (R)-beta-lysine produced by EpmB, forming a lysyl-adenylate, from which the beta-lysyl moiety is then transferred to the epsilon-amino group of a conserved specific lysine residue in EF-P. The sequence is that of Elongation factor P--(R)-beta-lysine ligase from Pectobacterium atrosepticum (strain SCRI 1043 / ATCC BAA-672) (Erwinia carotovora subsp. atroseptica).